The sequence spans 270 residues: Putative phosphoenolpyruvate synthase regulatory protein (270 aa).

150-157 is a binding site for ADP; sequence GVSRCGKT.

Belongs to the pyruvate, phosphate/water dikinase regulatory protein family. PSRP subfamily.

The catalysed reaction is [pyruvate, water dikinase] + ADP = [pyruvate, water dikinase]-phosphate + AMP + H(+). It catalyses the reaction [pyruvate, water dikinase]-phosphate + phosphate + H(+) = [pyruvate, water dikinase] + diphosphate. Its function is as follows. Bifunctional serine/threonine kinase and phosphorylase involved in the regulation of the phosphoenolpyruvate synthase (PEPS) by catalyzing its phosphorylation/dephosphorylation. The protein is Putative phosphoenolpyruvate synthase regulatory protein of Shewanella denitrificans (strain OS217 / ATCC BAA-1090 / DSM 15013).